A 300-amino-acid chain; its full sequence is Ribosomal RNA small subunit methyltransferase H (300 aa).

S-adenosyl-L-methionine contacts are provided by residues 33 to 35 (GGH), Asp53, Phe78, Asp97, and Gln104.

The protein belongs to the methyltransferase superfamily. RsmH family.

Its subcellular location is the cytoplasm. It carries out the reaction cytidine(1402) in 16S rRNA + S-adenosyl-L-methionine = N(4)-methylcytidine(1402) in 16S rRNA + S-adenosyl-L-homocysteine + H(+). Specifically methylates the N4 position of cytidine in position 1402 (C1402) of 16S rRNA. The sequence is that of Ribosomal RNA small subunit methyltransferase H from Karelsulcia muelleri (strain GWSS) (Sulcia muelleri).